The primary structure comprises 291 residues: ATP synthase subunit a (291 aa).

7 consecutive transmembrane segments (helical) span residues 50 to 70, 108 to 128, 129 to 149, 161 to 181, 203 to 223, 241 to 261, and 262 to 282; these read LDSM…FWIV, IAPL…MDLI, PVDW…GMDP, DPNI…FYSI, PVAK…TFLA, LIFI…SVPW, and AIFH…LTIV.

Belongs to the ATPase A chain family. In terms of assembly, F-type ATPases have 2 components, CF(1) - the catalytic core - and CF(0) - the membrane proton channel. CF(1) has five subunits: alpha(3), beta(3), gamma(1), delta(1), epsilon(1). CF(0) has three main subunits: a(1), b(2) and c(9-12). The alpha and beta chains form an alternating ring which encloses part of the gamma chain. CF(1) is attached to CF(0) by a central stalk formed by the gamma and epsilon chains, while a peripheral stalk is formed by the delta and b chains.

Its subcellular location is the cell inner membrane. In terms of biological role, key component of the proton channel; it plays a direct role in the translocation of protons across the membrane. The chain is ATP synthase subunit a from Acinetobacter baumannii (strain AB307-0294).